Reading from the N-terminus, the 517-residue chain is Ladinin-1 (517 aa).

Positions 1-401 (MAVSRKDWSA…SASMKLPDNT (401 aa)) are disordered. A Phosphoserine modification is found at Ser-38. The span at 48–58 (LSQNGDRQASA) shows a compositional bias: polar residues. Phosphoserine occurs at positions 64, 78, 121, and 123. Over residues 120 to 131 (NSLSPVQATQKP) the composition is skewed to polar residues. 2 stretches are compositionally biased toward basic and acidic residues: residues 134–151 (SKKELEIPPRRRLSREQR) and 161–174 (LVGREPEERKKGVP). SEK repeat units lie at residues 203-205 (SEK), 209-211 (SEK), 215-217 (SEK), 221-223 (SEK), 227-229 (SEK), 239-241 (SEK), 257-259 (SEK), and 269-271 (SEK). Residues 203-271 (SEKVLASEKT…IFEKALASEK (69 aa)) are 8 X SEK repeats. Over residues 219–233 (AVSEKRNSSEKKSVL) the composition is skewed to basic and acidic residues. Ser-347, Ser-356, and Ser-394 each carry phosphoserine. The span at 355–373 (SSPTQRTYSSSLKRSSPRT) shows a compositional bias: polar residues. At Arg-424 the chain carries Omega-N-methylarginine. Positions 481 to 517 (RTQESGDQDPQEAQKASSATERTQWGQKSDSSLDAEV) are disordered. Residue Ser-485 is modified to Phosphoserine. Positions 494 to 517 (QKASSATERTQWGQKSDSSLDAEV) are enriched in polar residues.

It is found in the secreted. Its subcellular location is the extracellular space. The protein resides in the extracellular matrix. It localises to the basement membrane. Anchoring filament protein which is a component of the basement membrane zone. This Homo sapiens (Human) protein is Ladinin-1 (LAD1).